The sequence spans 291 residues: Diaminopimelate epimerase (291 aa).

Substrate is bound by residues asparagine 13, glutamine 46, and asparagine 66. Cysteine 75 serves as the catalytic Proton donor. Substrate is bound by residues glycine 76–asparagine 77, asparagine 170, asparagine 203, and glutamate 221–arginine 222. Cysteine 230 functions as the Proton acceptor in the catalytic mechanism. A substrate-binding site is contributed by glycine 231–serine 232.

The protein belongs to the diaminopimelate epimerase family. As to quaternary structure, homodimer.

It localises to the cytoplasm. The enzyme catalyses (2S,6S)-2,6-diaminopimelate = meso-2,6-diaminopimelate. It participates in amino-acid biosynthesis; L-lysine biosynthesis via DAP pathway; DL-2,6-diaminopimelate from LL-2,6-diaminopimelate: step 1/1. Catalyzes the stereoinversion of LL-2,6-diaminopimelate (L,L-DAP) to meso-diaminopimelate (meso-DAP), a precursor of L-lysine and an essential component of the bacterial peptidoglycan. The sequence is that of Diaminopimelate epimerase from Albidiferax ferrireducens (strain ATCC BAA-621 / DSM 15236 / T118) (Rhodoferax ferrireducens).